Consider the following 77-residue polypeptide: PTS system N-acetylglucosamine-specific EIIB component (77 aa).

One can recognise a PTS EIIB type-1 domain in the interval Ala-2–Met-77. Cys-24 serves as the catalytic Phosphocysteine intermediate; for EIIB activity.

It carries out the reaction N(pros)-phospho-L-histidyl-[protein] + N-acetyl-D-glucosamine(out) = N-acetyl-D-glucosamine 6-phosphate(in) + L-histidyl-[protein]. In terms of biological role, the phosphoenolpyruvate-dependent sugar phosphotransferase system (sugar PTS), a major carbohydrate active transport system, catalyzes the phosphorylation of incoming sugar substrates concomitantly with their translocation across the cell membrane. This system is involved in N-acetylglucosamine (GlcNAc) transport. This Streptomyces coelicolor (strain ATCC BAA-471 / A3(2) / M145) protein is PTS system N-acetylglucosamine-specific EIIB component.